The following is a 362-amino-acid chain: Type II methyltransferase M.MamI (362 aa).

The protein belongs to the N(4)/N(6)-methyltransferase family.

The enzyme catalyses a 2'-deoxyadenosine in DNA + S-adenosyl-L-methionine = an N(6)-methyl-2'-deoxyadenosine in DNA + S-adenosyl-L-homocysteine + H(+). Its function is as follows. A gamma subtype methylase that recognizes the double-stranded sequence 5'-GATNNNNATC-3', methylates A-? on both strands, and protects the DNA from cleavage by the MamI endonuclease. This Microbacterium ammoniaphilum protein is Type II methyltransferase M.MamI.